A 301-amino-acid chain; its full sequence is Phosphoribosylaminoimidazole-succinocarboxamide synthase (301 aa).

It belongs to the SAICAR synthetase family.

The enzyme catalyses 5-amino-1-(5-phospho-D-ribosyl)imidazole-4-carboxylate + L-aspartate + ATP = (2S)-2-[5-amino-1-(5-phospho-beta-D-ribosyl)imidazole-4-carboxamido]succinate + ADP + phosphate + 2 H(+). The protein operates within purine metabolism; IMP biosynthesis via de novo pathway; 5-amino-1-(5-phospho-D-ribosyl)imidazole-4-carboxamide from 5-amino-1-(5-phospho-D-ribosyl)imidazole-4-carboxylate: step 1/2. In Cyberlindnera jadinii (Torula yeast), this protein is Phosphoribosylaminoimidazole-succinocarboxamide synthase (ADE1).